Reading from the N-terminus, the 454-residue chain is Oxygen-dependent coproporphyrinogen-III oxidase, mitochondrial (454 aa).

The transit peptide at M1–A110 directs the protein to the mitochondrion. The interval A43 to G70 is disordered. S112 carries the post-translational modification Phosphoserine. The segment at V193–K202 is important for dimerization. Residue S244 participates in coproporphyrinogen III binding. H258 serves as the catalytic Proton donor. N260–R262 provides a ligand contact to coproporphyrinogen III. Residues Y392–E428 are important for dimerization. Residue K404 is modified to N6-acetyllysine; alternate. At K404 the chain carries N6-succinyllysine; alternate. G411–R413 provides a ligand contact to coproporphyrinogen III.

It belongs to the aerobic coproporphyrinogen-III oxidase family. In terms of assembly, homodimer.

It localises to the mitochondrion intermembrane space. The enzyme catalyses coproporphyrinogen III + O2 + 2 H(+) = protoporphyrinogen IX + 2 CO2 + 2 H2O. Its pathway is porphyrin-containing compound metabolism; protoporphyrin-IX biosynthesis; protoporphyrinogen-IX from coproporphyrinogen-III (O2 route): step 1/1. In terms of biological role, catalyzes the aerobic oxidative decarboxylation of propionate groups of rings A and B of coproporphyrinogen-III to yield the vinyl groups in protoporphyrinogen-IX and participates to the sixth step in the heme biosynthetic pathway. The polypeptide is Oxygen-dependent coproporphyrinogen-III oxidase, mitochondrial (Homo sapiens (Human)).